A 122-amino-acid chain; its full sequence is Large ribosomal subunit protein bL12 (122 aa).

The protein belongs to the bacterial ribosomal protein bL12 family. As to quaternary structure, homodimer. Part of the ribosomal stalk of the 50S ribosomal subunit. Forms a multimeric L10(L12)X complex, where L10 forms an elongated spine to which 2 to 4 L12 dimers bind in a sequential fashion. Binds GTP-bound translation factors.

Its function is as follows. Forms part of the ribosomal stalk which helps the ribosome interact with GTP-bound translation factors. Is thus essential for accurate translation. This is Large ribosomal subunit protein bL12 from Dichelobacter nodosus (strain VCS1703A).